The chain runs to 367 residues: Alpha-2-HS-glycoprotein (367 aa).

An N-terminal signal peptide occupies residues 1–18; the sequence is MKSLVLLLCLAQLWGCHS. One can recognise a Cystatin fetuin-A-type 1 domain in the interval 27–133; sequence YRQPNCDDPE…KFSVVYAKCD (107 aa). 6 cysteine pairs are disulfide-bonded: cysteine 32–cysteine 358, cysteine 89–cysteine 100, cysteine 114–cysteine 132, cysteine 146–cysteine 149, cysteine 208–cysteine 219, and cysteine 230–cysteine 247. At serine 134 the chain carries Phosphoserine. Phosphoserine; by FAM20C occurs at positions 135 and 138. Residues 144-255 enclose the Cystatin fetuin-A-type 2 domain; sequence KVCQDCPLLA…TCMVFQTQPV (112 aa). Residues asparagine 156 and asparagine 176 are each glycosylated (N-linked (GlcNAc...) (complex) asparagine). The segment at 255-298 is disordered; it reads VSSQPQPEGANEAVPTPVVDPDAPPSPPLGAPGLPPAGSPPDSH. An O-linked (GalNAc...) threonine glycan is attached at threonine 270. The span at 276–293 shows a compositional bias: pro residues; sequence DAPPSPPLGAPGLPPAGS. Serine 280 and serine 293 each carry an O-linked (GalNAc...) serine glycan. Residues 301 to 340 constitute a propeptide, connecting peptide; it reads LAAPPGHQLHRAHYDLRHTFMGVVSLGSPSGEVSHPRKTR. Threonine 319 is subject to Phosphothreonine; by FAM20C. Phosphoserine; by FAM20C is present on residues serine 325, serine 328, and serine 330. O-linked (GalNAc...) threonine glycans are attached at residues threonine 339 and threonine 341. O-linked (GalNAc...) serine glycosylation occurs at serine 346.

It belongs to the fetuin family. In terms of assembly, alpha-2-HS glycoprotein derives from this precursor, when the connecting peptide is cleaved off. The two chains A and B are held together by a single disulfide bond. Phosphorylated by FAM20C in the extracellular medium. Post-translationally, O- and N-glycosylated. O-glycosylated with core 1 or possibly core 8 glycans. N-glycan at Asn-156: Hex5HexNAc4; N-glycan heterogeneity at Asn-176: Hex5HexNAc4 (major) and Hex6HexNAc5 (minor). Synthesized in liver and selectively concentrated in bone matrix. Secreted in plasma. It is also found in dentin in much higher quantities than other plasma proteins.

It is found in the secreted. In terms of biological role, promotes endocytosis, possesses opsonic properties and influences the mineral phase of bone. Shows affinity for calcium and barium ions. In Homo sapiens (Human), this protein is Alpha-2-HS-glycoprotein (AHSG).